The following is a 353-amino-acid chain: Protein RecA (353 aa).

Gly67–Thr74 contributes to the ATP binding site.

It belongs to the RecA family.

It is found in the cytoplasm. Can catalyze the hydrolysis of ATP in the presence of single-stranded DNA, the ATP-dependent uptake of single-stranded DNA by duplex DNA, and the ATP-dependent hybridization of homologous single-stranded DNAs. It interacts with LexA causing its activation and leading to its autocatalytic cleavage. The polypeptide is Protein RecA (Shewanella loihica (strain ATCC BAA-1088 / PV-4)).